Here is a 149-residue protein sequence, read N- to C-terminus: Large ribosomal subunit protein uL24 (149 aa).

It belongs to the universal ribosomal protein uL24 family. Part of the 50S ribosomal subunit.

Functionally, one of two assembly initiator proteins, it binds directly to the 5'-end of the 23S rRNA, where it nucleates assembly of the 50S subunit. Its function is as follows. One of the proteins that surrounds the polypeptide exit tunnel on the outside of the subunit. The protein is Large ribosomal subunit protein uL24 of Nostoc sp. (strain PCC 7120 / SAG 25.82 / UTEX 2576).